The sequence spans 181 residues: ADP-ribosylation factor 1 (181 aa).

G2 carries N-myristoyl glycine lipidation. The interval 3–16 (LYVSRLFNRLFQKK) is important for the stable binding to the membranes. Residues 27-32 (AAGKTT), 126-129 (NKQD), and A160 each bind GTP.

Belongs to the small GTPase superfamily. Arf family. May interact with GTPase RAB5b.

The protein localises to the golgi apparatus membrane. The catalysed reaction is GTP + H2O = GDP + phosphate + H(+). With respect to regulation, alternates between an inactive GDP-bound form and an active GTP-bound form. Intrinsic GTPase activity is almost undetectable in vitro. Activated by a guanine nucleotide-exchange factor (GEF) and inactivated by GTPase-activating protein ARFGAP1. In terms of biological role, small GTPase involved in protein trafficking between different compartments. Modulates vesicle budding and uncoating within the Golgi complex. In its GTP-bound form, triggers the recruitment of coatomer proteins to the Golgi membrane. The hydrolysis of ARF1-bound GTP, which is mediated by ARFGAPs proteins, is required for dissociation of coat proteins from Golgi membranes and vesicles. Regulates the transport of N-acylated AK2 to the parasitophorous vacuole membrane. May be involved in the activation of lipid kinase PIP5K. This Plasmodium falciparum (isolate 3D7) protein is ADP-ribosylation factor 1.